A 145-amino-acid chain; its full sequence is UPF0735 ACT domain-containing protein CPR_1404 (145 aa).

The 76-residue stretch at 69-144 folds into the ACT domain; sequence IFNMVVTHEK…GVEKVEFVAM (76 aa).

Belongs to the UPF0735 family.

In Clostridium perfringens (strain SM101 / Type A), this protein is UPF0735 ACT domain-containing protein CPR_1404.